A 486-amino-acid chain; its full sequence is Uridine/cytidine kinase UKL1, chloroplastic (486 aa).

Residues 1–47 (MPEDSSSLDYAMEKASGPHFSGLRFDGLLSSSPPNSSVVSSLRSAVS) constitute a chloroplast transit peptide. Low complexity predominate over residues 31–54 (SSPPNSSVVSSLRSAVSSSSPSSS). Positions 31–67 (SSPPNSSVVSSLRSAVSSSSPSSSDPEAPKQPFIIGV) are disordered. The segment at 59 to 264 (PKQPFIIGVS…ITQHIHTKLG (206 aa)) is uridine kinase. The uracil phosphoribosyltransferase stretch occupies residues 274 to 486 (NVYVIQSTFQ…RYFGTDEEDQ (213 aa)). GTP-binding positions include lysine 298, arginine 307, and 341 to 344 (CKKL). Residues arginine 351 and arginine 376 each coordinate 5-phospho-alpha-D-ribose 1-diphosphate. GTP is bound at residue arginine 396. Residues aspartate 402, 407 to 410 (TGNS), and glutamate 473 each bind 5-phospho-alpha-D-ribose 1-diphosphate. 472–474 (GEF) is a uracil binding site.

The protein in the N-terminal section; belongs to the uridine kinase family. It in the C-terminal section; belongs to the UPRTase family. Expressed in roots, leaves and stems.

It localises to the plastid. Its subcellular location is the chloroplast. The protein resides in the cytoplasm. It catalyses the reaction cytidine + ATP = CMP + ADP + H(+). The catalysed reaction is uridine + ATP = UMP + ADP + H(+). Its pathway is pyrimidine metabolism; CTP biosynthesis via salvage pathway; CTP from cytidine: step 1/3. It participates in pyrimidine metabolism; UMP biosynthesis via salvage pathway; UMP from uridine: step 1/1. Involved in the pyrimidine salvage pathway. Phosphorylates uridine to uridine monophosphate (UMP). Phosphorylates cytidine to cytidine monophosphate (CMP). Does not possess uracil phosphoribosyltransferase (UPRTase) activity that catalyzes the conversion of uracil and 5-phospho-alpha-D-ribose 1-diphosphate (PRPP) to UMP and diphosphate. This is Uridine/cytidine kinase UKL1, chloroplastic from Arabidopsis thaliana (Mouse-ear cress).